A 179-amino-acid polypeptide reads, in one-letter code: Peptide deformylase (179 aa).

Residues C102 and H144 each coordinate Fe cation. E145 is a catalytic residue. Residue H148 coordinates Fe cation.

The protein belongs to the polypeptide deformylase family. It depends on Fe(2+) as a cofactor.

The enzyme catalyses N-terminal N-formyl-L-methionyl-[peptide] + H2O = N-terminal L-methionyl-[peptide] + formate. Its function is as follows. Removes the formyl group from the N-terminal Met of newly synthesized proteins. Requires at least a dipeptide for an efficient rate of reaction. N-terminal L-methionine is a prerequisite for activity but the enzyme has broad specificity at other positions. The chain is Peptide deformylase from Wolbachia pipientis subsp. Culex pipiens (strain wPip).